We begin with the raw amino-acid sequence, 352 residues long: Glycerol-1-phosphate dehydrogenase [NAD(P)+] (352 aa).

NAD(+)-binding positions include 99 to 103 (GTKID) and 121 to 124 (TSPS). Aspartate 126 serves as a coordination point for substrate. Position 130 (serine 130) interacts with NAD(+). Aspartate 173 serves as a coordination point for substrate. Residues aspartate 173 and histidine 253 each coordinate Zn(2+). Histidine 257 contributes to the substrate binding site. Residue histidine 269 participates in Zn(2+) binding.

It belongs to the glycerol-1-phosphate dehydrogenase family. The cofactor is Zn(2+).

It localises to the cytoplasm. It carries out the reaction sn-glycerol 1-phosphate + NAD(+) = dihydroxyacetone phosphate + NADH + H(+). The catalysed reaction is sn-glycerol 1-phosphate + NADP(+) = dihydroxyacetone phosphate + NADPH + H(+). The protein operates within membrane lipid metabolism; glycerophospholipid metabolism. Its function is as follows. Catalyzes the NAD(P)H-dependent reduction of dihydroxyacetonephosphate (DHAP or glycerone phosphate) to glycerol 1-phosphate (G1P). The G1P thus generated is used as the glycerophosphate backbone of phospholipids in the cellular membranes of Archaea. In Thermoplasma volcanium (strain ATCC 51530 / DSM 4299 / JCM 9571 / NBRC 15438 / GSS1), this protein is Glycerol-1-phosphate dehydrogenase [NAD(P)+].